The chain runs to 292 residues: MPWIQIKINATAKTANKVSNMLMGLGAQAVTYMDAQDTPVYEPLPGETKLWGDTRCIGLFDAEVDPAPIVAFFQQHFGEDVPYQVELLEDKDWVREWMEHFQPMQFGERLWICPSWRDVPDPTAVNVLLDPGLAFGTGTHPTTALCLQWLDSLDLKGKTLVDFGCGSGILAIAALKLGAERVIGIDIDPQAIEASRDNAQRNGVSDQLELYLPEDQPKNFQADIVVANILAGPLRELSGLISGLVKPHGLMAISGILESQAPELLEVYSQWFAMNPATEREEWCRLDGIKKG.

S-adenosyl-L-methionine is bound by residues Thr-143, Gly-164, Asp-186, and Asn-228.

It belongs to the methyltransferase superfamily. PrmA family.

The protein localises to the cytoplasm. The enzyme catalyses L-lysyl-[protein] + 3 S-adenosyl-L-methionine = N(6),N(6),N(6)-trimethyl-L-lysyl-[protein] + 3 S-adenosyl-L-homocysteine + 3 H(+). Methylates ribosomal protein L11. The chain is Ribosomal protein L11 methyltransferase from Tolumonas auensis (strain DSM 9187 / NBRC 110442 / TA 4).